A 78-amino-acid polypeptide reads, in one-letter code: RNA-binding protein KhpA (78 aa).

One can recognise a KH domain in the interval 29–78 (TIIYELSVAKPDIGKIIGKEGRTIKAIRTLLVSVASRNNVRVSLEIMEEK).

Belongs to the KhpA RNA-binding protein family.

It localises to the cytoplasm. Functionally, a probable RNA-binding protein. The protein is RNA-binding protein KhpA of Chlamydia pneumoniae (Chlamydophila pneumoniae).